Consider the following 179-residue polypeptide: MSRIGKIPVTVPGGVDVSIDGQDVTVKGPKGTLALTISEPIVIAKNDDGTLSVTRPDDERRSRALHGLSRTLVQNLITGVTDGYTTKMEIHGVGYRVALKGKDLEFALGYSHPVPIEAPEGITFAVESPTKFSVSGIDKQKVGQISANIRRLRRPDPYKGKGVRYEGEQIRRKVGKTGK.

It belongs to the universal ribosomal protein uL6 family. In terms of assembly, part of the 50S ribosomal subunit.

In terms of biological role, this protein binds to the 23S rRNA, and is important in its secondary structure. It is located near the subunit interface in the base of the L7/L12 stalk, and near the tRNA binding site of the peptidyltransferase center. The chain is Large ribosomal subunit protein uL6 from Rhodococcus opacus (strain B4).